Reading from the N-terminus, the 311-residue chain is Olfactory receptor 5AN1 (311 aa).

The Extracellular segment spans residues 1–26; the sequence is MTGGGNITEITYFILLGFSDFPRIIK. Residue asparagine 6 is glycosylated (N-linked (GlcNAc...) asparagine). A helical transmembrane segment spans residues 27–47; the sequence is VLFTIFLVIYITSLAWNLSLI. At 48–55 the chain is on the cytoplasmic side; that stretch reads VLIRMDSH. Residues 56 to 76 form a helical membrane-spanning segment; it reads LHTPMYFFLSNLSFIDVCYIS. The Extracellular portion of the chain corresponds to 77-100; it reads STVPKMLSNLLQEQQTITFVGCII. A disulfide bond links cysteine 98 and cysteine 190. A helical transmembrane segment spans residues 101–121; sequence QYFIFSTMGLSESCLMTAMAY. Residues 122 to 134 are Cytoplasmic-facing; the sequence is DRYAAICNPLLYS. Residues 135-155 traverse the membrane as a helical segment; it reads SIMSPTLCVWMVLGAYMTGLT. At 156 to 197 the chain is on the extracellular side; it reads ASLFQIGALLQLHFCGSNVIRHFFCDMPQLLILSCTDTFFVQ. The chain crosses the membrane as a helical span at residues 198 to 218; it reads VMTAILTMFFGIASALVIMIS. Over 219 to 238 the chain is Cytoplasmic; sequence YGYIGISIMKITSAKGRSKA. The helical transmembrane segment at 239–259 threads the bilayer; it reads FNTCASHLTAVSLFYTSGIFV. The Extracellular segment spans residues 260–272; sequence YLSSSSGGSSSFD. A helical transmembrane segment spans residues 273–293; it reads RFASVFYTVVIPMLNPLIYSL. The Cytoplasmic segment spans residues 294 to 311; sequence RNKEIKDALKRLQKRKCC.

This sequence belongs to the G-protein coupled receptor 1 family.

The protein localises to the cell membrane. Odorant receptor for musk, which specifically recognizes muscone, musk xylol, and musk ketone. Ligand-binding causes a conformation change that triggers signaling via G(s)-class of G alpha protein GNAL, activating adenylyl cyclase. This is Olfactory receptor 5AN1 from Homo sapiens (Human).